The sequence spans 495 residues: Two-component response regulator-like APRR3 (495 aa).

Residues 65–183 (KVLLVENDDS…ELKNLWQHVW (119 aa)) enclose the Response regulatory domain. Disordered stretches follow at residues 188–441 (SSSG…RWAQ) and 465–495 (HSRK…SEDN). Positions 206–217 (PESTQGSENDAS) are enriched in polar residues. Residues 231 to 248 (GLSNQDGGSDNGSGTQSS) are compositionally biased toward low complexity. Positions 256-265 (TKSTSPSNQF) are enriched in polar residues. Over residues 284–293 (RLKEAEDQKE) the composition is skewed to basic and acidic residues. The span at 294 to 304 (QIGTGSQTGMS) shows a compositional bias: polar residues. Residues 307 to 319 (KKAEEPGDLEKNA) show a composition bias toward basic and acidic residues. Polar residues predominate over residues 335 to 350 (NRSSGNSQVESKAPSS). A coiled-coil region spans residues 349 to 372 (SSNREDLQSLEQTLKKTREDRDYK). The segment covering 351-378 (NREDLQSLEQTLKKTREDRDYKVGDRSV) has biased composition (basic and acidic residues). 2 stretches are compositionally biased toward polar residues: residues 380 to 395 (RHSN…NGAT) and 420 to 436 (GSSS…SSGS). Residues 442–484 (REAALMKFRLKRKERCFEKKVRYHSRKKLAEQRPHVKGQFIRK) form the CCT domain. The span at 483-495 (RKRDDHKSGSEDN) shows a compositional bias: basic and acidic residues.

Belongs to the ARR-like family. Interacts with APRR1/TOC1 (via N-terminus). In terms of processing, phosphorylated by WNK1; during the night. Phosphorylation is required for optimal interaction with APRR1/TOC1.

It is found in the nucleus. Its function is as follows. Controls photoperiodic flowering response. Component of the circadian clock. Controls the degradation of APRR1/TOC1 by the SCF(ZTL) complex. Expression of several members of the ARR-like family is controlled by circadian rhythm. The particular coordinated sequential expression of APRR9, APRR7, APRR5, APRR3 and APPR1 result to circadian waves that may be at the basis of the endogenous circadian clock. This Arabidopsis thaliana (Mouse-ear cress) protein is Two-component response regulator-like APRR3 (APRR3).